We begin with the raw amino-acid sequence, 311 residues long: tRNA N6-adenosine threonylcarbamoyltransferase (311 aa).

Fe cation contacts are provided by histidine 108 and histidine 112. Residues 130–134, aspartate 163, glycine 176, aspartate 180, and asparagine 270 contribute to the substrate site; that span reads LVSGG. Aspartate 294 provides a ligand contact to Fe cation.

It belongs to the KAE1 / TsaD family. Requires Fe(2+) as cofactor.

The protein resides in the cytoplasm. The enzyme catalyses L-threonylcarbamoyladenylate + adenosine(37) in tRNA = N(6)-L-threonylcarbamoyladenosine(37) in tRNA + AMP + H(+). In terms of biological role, required for the formation of a threonylcarbamoyl group on adenosine at position 37 (t(6)A37) in tRNAs that read codons beginning with adenine. Is involved in the transfer of the threonylcarbamoyl moiety of threonylcarbamoyl-AMP (TC-AMP) to the N6 group of A37, together with TsaE and TsaB. TsaD likely plays a direct catalytic role in this reaction. The polypeptide is tRNA N6-adenosine threonylcarbamoyltransferase (Metamycoplasma arthritidis (strain 158L3-1) (Mycoplasma arthritidis)).